Here is a 607-residue protein sequence, read N- to C-terminus: Elongation factor 4 (607 aa).

In terms of domain architecture, tr-type G spans Lys-11–Thr-193. GTP is bound by residues Asp-23–Thr-28 and Asn-140–Asp-143.

It belongs to the TRAFAC class translation factor GTPase superfamily. Classic translation factor GTPase family. LepA subfamily.

Its subcellular location is the cell membrane. It catalyses the reaction GTP + H2O = GDP + phosphate + H(+). Its function is as follows. Required for accurate and efficient protein synthesis under certain stress conditions. May act as a fidelity factor of the translation reaction, by catalyzing a one-codon backward translocation of tRNAs on improperly translocated ribosomes. Back-translocation proceeds from a post-translocation (POST) complex to a pre-translocation (PRE) complex, thus giving elongation factor G a second chance to translocate the tRNAs correctly. Binds to ribosomes in a GTP-dependent manner. This is Elongation factor 4 from Exiguobacterium sibiricum (strain DSM 17290 / CCUG 55495 / CIP 109462 / JCM 13490 / 255-15).